The sequence spans 287 residues: uncharacterized protein (287 aa).

This is an uncharacterized protein from Mycoplasma genitalium (strain ATCC 33530 / DSM 19775 / NCTC 10195 / G37) (Mycoplasmoides genitalium).